The chain runs to 228 residues: Probable ribosomal RNA small subunit methyltransferase A (228 aa).

The S-adenosyl-L-methionine site is built by H9, L11, G34, E55, D78, and N93.

The protein belongs to the class I-like SAM-binding methyltransferase superfamily. rRNA adenine N(6)-methyltransferase family. RsmA subfamily.

Its subcellular location is the cytoplasm. Specifically dimethylates two adjacent adenosines in the loop of a conserved hairpin near the 3'-end of 16S rRNA in the 30S particle. May play a critical role in biogenesis of 30S subunits. This is Probable ribosomal RNA small subunit methyltransferase A from Pyrobaculum aerophilum (strain ATCC 51768 / DSM 7523 / JCM 9630 / CIP 104966 / NBRC 100827 / IM2).